Consider the following 163-residue polypeptide: Succinate dehydrogenase assembly factor 2-B, mitochondrial (163 aa).

Residues 1–23 (MFRQLRLTMDISGWIFMPWRRSL) constitute a mitochondrion transit peptide.

Belongs to the SDHAF2 family. Interacts with the flavoprotein subunit within the SDH catalytic dimer.

It is found in the mitochondrion matrix. Plays an essential role in the assembly of succinate dehydrogenase (SDH), an enzyme complex (also referred to as respiratory complex II) that is a component of both the tricarboxylic acid (TCA) cycle and the mitochondrial electron transport chain, and which couples the oxidation of succinate to fumarate with the reduction of ubiquinone (coenzyme Q) to ubiquinol. Required for flavinylation (covalent attachment of FAD) of the flavoprotein subunit of the SDH catalytic dimer. This is Succinate dehydrogenase assembly factor 2-B, mitochondrial from Drosophila ananassae (Fruit fly).